The sequence spans 831 residues: Zinc transporter ZIP10 (831 aa).

The first 25 residues, 1–25 (MKVHMHTKFCLICLLTFIFHHCNHC), serve as a signal peptide directing secretion. Residues 126–318 (HNHQHSHNHL…RKREAPHVKN (193 aa)) are disordered. Polar residues predominate over residues 138 to 147 (ENQTVTSVST). Residue Asn-139 is glycosylated (N-linked (GlcNAc...) asparagine). The segment covering 152–171 (KCDPEKETVEVSVKSDDKHM) has biased composition (basic and acidic residues). Basic residues predominate over residues 172–188 (HDHNHRLRHHHRLHHHL). A compositionally biased stretch (basic and acidic residues) spans 189–198 (DHNNTHHFHN). 2 N-linked (GlcNAc...) asparagine glycosylation sites follow: Asn-198 and Asn-218. A compositionally biased stretch (polar residues) spans 211–221 (NEPSTETNKTQ). The segment covering 229-238 (PKGKRKKKGR) has biased composition (basic residues). Composition is skewed to basic and acidic residues over residues 256–273 (DQGEQYEHNRVHKPDRVH) and 281–315 (HLPERNGHDPGRGHQDLDPDNEGELRHTRKREAPH). Residue Asn-339 is glycosylated (N-linked (GlcNAc...) asparagine). A run of 2 helical transmembrane segments spans residues 411–431 (IISITVISLLSLLGVILVPII) and 438–458 (FLLTFLVALAVGTMSGDALLH). A disordered region spans residues 464-484 (QGGHDHSHQHAHGHGHSHGHE). Residues 495-515 (VLKGLVALGGIYLLFIIEHCI) form a helical membrane-spanning segment. Thr-536 and Thr-553 each carry phosphothreonine. Phosphoserine is present on Ser-591. 4 helical membrane passes run 687–707 (AIGAAFSAGLTGGISTSIAVF), 732–752 (IVYNLLSAMMAYIGMLIGTAV), 759–779 (ITLWIFAVTAGMFLYVALVDM), and 801–821 (FILQNLGLLFGFAIMLVIALY).

It belongs to the ZIP transporter (TC 2.A.5) family. As to quaternary structure, interacts with SLC39A6; which triggers cells to undergo EMT and mitosis. Found in a complex with SLC39A6, SLC39A10 and with the 'Ser-727' phosphorylated form of STAT3 throughout mitosis. Found in a complex with SLC39A6, SLC39A10 and with NCAM1; this complex controls NCAM1 phosphorylation and integration into focal adhesion complexes during epithelial-tomesenchymal transition. Found in a complex with SLC39A6, SLC39A10 and with GSK3B that controls NCAM1 phosphorylation. Post-translationally, undergoes N-terminal ectodomain shedding.

The protein localises to the cell membrane. It is found in the apical cell membrane. It carries out the reaction Zn(2+)(in) = Zn(2+)(out). Its function is as follows. Zinc-influx transporter. When associated with SLC39A6, the heterodimer formed by SLC39A10 and SLC39A6 mediates cellular zinc uptake to trigger cells to undergo epithelial-to-mesenchymal transition (EMT). SLC39A10-SLC39A6 heterodimers play also an essentiel role in initiating mitosis by importing zinc into cells to initiate a pathway resulting in the onset of mitosis. Plays an important for both mature B-cell maintenance and humoral immune responses. When associated with SLC39A10, the heterodimer controls NCAM1 phosphorylation and integration into focal adhesion complexes during EMT. This Homo sapiens (Human) protein is Zinc transporter ZIP10.